A 508-amino-acid chain; its full sequence is Lysine--tRNA ligase (508 aa).

Mg(2+)-binding residues include Glu403 and Glu410.

Belongs to the class-II aminoacyl-tRNA synthetase family. As to quaternary structure, homodimer. It depends on Mg(2+) as a cofactor.

It is found in the cytoplasm. It carries out the reaction tRNA(Lys) + L-lysine + ATP = L-lysyl-tRNA(Lys) + AMP + diphosphate. This is Lysine--tRNA ligase from Methanoculleus marisnigri (strain ATCC 35101 / DSM 1498 / JR1).